Here is a 143-residue protein sequence, read N- to C-terminus: Actin-depolymerizing factor 5 (143 aa).

The ADF-H domain occupies 11-143 (GMNVKEECQR…GYDVIRGRAQ (133 aa)).

The protein belongs to the actin-binding proteins ADF family.

Actin-depolymerizing protein. Severs actin filaments (F-actin) and binds to actin monomers. The chain is Actin-depolymerizing factor 5 (ADF5) from Oryza sativa subsp. japonica (Rice).